Here is a 236-residue protein sequence, read N- to C-terminus: Urease accessory protein UreF (236 aa).

This sequence belongs to the UreF family. As to quaternary structure, ureD, UreF and UreG form a complex that acts as a GTP-hydrolysis-dependent molecular chaperone, activating the urease apoprotein by helping to assemble the nickel containing metallocenter of UreC. The UreE protein probably delivers the nickel.

It localises to the cytoplasm. Required for maturation of urease via the functional incorporation of the urease nickel metallocenter. The chain is Urease accessory protein UreF from Granulibacter bethesdensis (strain ATCC BAA-1260 / CGDNIH1).